Here is a 209-residue protein sequence, read N- to C-terminus: Outer-membrane lipoprotein carrier protein (209 aa).

The N-terminal stretch at 1 to 21 (MHRQLRYAVLATALFASTAFA) is a signal peptide.

This sequence belongs to the LolA family. In terms of assembly, monomer.

It localises to the periplasm. Functionally, participates in the translocation of lipoproteins from the inner membrane to the outer membrane. Only forms a complex with a lipoprotein if the residue after the N-terminal Cys is not an aspartate (The Asp acts as a targeting signal to indicate that the lipoprotein should stay in the inner membrane). This Xanthomonas campestris pv. campestris (strain 8004) protein is Outer-membrane lipoprotein carrier protein.